A 187-amino-acid chain; its full sequence is Peptidoglycan-recognition protein 3 (187 aa).

A signal peptide spans 1 to 19 (MKAFLVALLISIELALVFA). Cystine bridges form between C21-C144 and C58-C64. The 128-residue stretch at 43–170 (KPLKYVIINH…RTIRQTNSPG (128 aa)) folds into the N-acetylmuramoyl-L-alanine amidase domain. N51 carries an N-linked (GlcNAc...) asparagine glycan.

Belongs to the N-acetylmuramoyl-L-alanine amidase 2 family.

It is found in the secreted. Functionally, peptidoglycan-recognition protein probably involved in innate immunity by binding to peptidoglycans (PGN) of bacteria and activating the prophenoloxidase (proPO) cascade immune response. Binds to 1,3-beta-D-glucan and PGN. This chain is Peptidoglycan-recognition protein 3 (PGRP-3), found in Holotrichia diomphalia (Korean black chafer).